Reading from the N-terminus, the 412-residue chain is rRNA methyltransferase 1, mitochondrial (412 aa).

The transit peptide at 1-20 directs the protein to the mitochondrion; the sequence is MTSLTNAVFKRYLAVTPSAH.

It belongs to the class IV-like SAM-binding methyltransferase superfamily. RNA methyltransferase TrmH family.

It localises to the mitochondrion. The catalysed reaction is guanosine(2270) in 21S rRNA + S-adenosyl-L-methionine = 2'-O-methylguanosine(2270) in 21S rRNA + S-adenosyl-L-homocysteine + H(+). Its function is as follows. S-adenosyl-L-methionine-dependent 2'-O-ribose methyltransferase that catalyzes the formation of 2'-O-methylguanosine at position 2270 (Gm2270) in the 21S mitochondrial large subunit ribosomal RNA (mtLSU rRNA), a universally conserved modification in the peptidyl transferase domain of the mtLSU rRNA. This modification seems to be important for the normal accumulation of the mitochondrial large ribosomal subunit. The polypeptide is rRNA methyltransferase 1, mitochondrial (Saccharomyces cerevisiae (strain ATCC 204508 / S288c) (Baker's yeast)).